Reading from the N-terminus, the 221-residue chain is Putative NAD(P)H nitroreductase YfkO (221 aa).

FMN-binding positions include 15-17 and 73-75; these read RHA and QKQ. 157–162 is a binding site for NAD(+); that stretch reads AAAQIG. Residues 169–170 and R211 contribute to the FMN site; that span reads EG.

The protein belongs to the nitroreductase family. As to quaternary structure, monomer. Requires FMN as cofactor.

This chain is Putative NAD(P)H nitroreductase YfkO (yfkO), found in Bacillus subtilis (strain 168).